Consider the following 303-residue polypeptide: Phytochrome-associated serine/threonine-protein phosphatase 1 (303 aa).

Zn(2+) is bound by residues Asp-50, His-52, Asp-78, and Asn-110. His-111 functions as the Proton donor in the catalytic mechanism. His-160 and His-234 together coordinate Zn(2+).

Belongs to the PPP phosphatase family. PP-6 (PP-V) subfamily. As to quaternary structure, interacts with PHYA and PHYB, mostly when they are phosphorylated and in Pfr forms. Interacts with TAP46. Interacts with PIN1 and PIN2. Interacts with ABI5. Interacts with PIF3 and PIF4. Protein phosphatase 6 (PP6) holoenzyme is a heterotrimeric complex formed by the catalytic subunit FYPP, a SAPS domain-containing subunit (SAL) and a protein phosphatase 2A regulatory subunit A (PP2AA). It depends on Zn(2+) as a cofactor. Mostly expressed in flowers. Also detected to a lower extent in stems and leaves. Expressed in roots.

It localises to the cytoplasm. The enzyme catalyses O-phospho-L-seryl-[protein] + H2O = L-seryl-[protein] + phosphate. It carries out the reaction O-phospho-L-threonyl-[protein] + H2O = L-threonyl-[protein] + phosphate. In terms of biological role, catalytic subunit of protein phosphatase 6 (PP6). Dephosphorylates phosphorylated phytochromes, with a preference toward Pfr forms. Plays a major role in the photoperiodic control of flowering time in long days by modulating phytochrome signals in flowering time control. Involved in the regulation of polar auxin transport in roots. Dephosphorylates directly the auxin efflux carriers PIN1 and PIN2, thus promoting their proper polar localization in root cell plasma membrane. Acts antagonistically with the protein kinase PID to regulate the reversible phosphorylation of PIN and polar targeting, subsequently impacting polar auxin transport and plant development. Involved in the regulation of abscisic acid (ABA) signaling during seed germination and postgermination seedling growth. Functions as a negative regulator of ABA signaling through direct dephosphorylation and destabilization of ABI5. Acts antagonistically with the protein kinase SRK2E/SNRK2.6 to regulate ABI5 phosphorylation and ABA responses. Involved in the regulation of phosphorylation status in hypocotyl phototropism. Involved in the negative regulation of photomorphogenesis by controlling the stability and transcriptional activity of PIF3 and PIF4 proteins in the dark, via the regulation of their phosphorylation status. This is Phytochrome-associated serine/threonine-protein phosphatase 1 from Arabidopsis thaliana (Mouse-ear cress).